Here is a 249-residue protein sequence, read N- to C-terminus: EID1-like F-box protein 2 (249 aa).

One can recognise an F-box domain in the interval 16-68; that stretch reads HCTKGHLSEEVLFLMVQHLNWNPNVIATLSCVCKWFDDLAKRLLWKEFCRARA.

This chain is EID1-like F-box protein 2 (EDL2), found in Arabidopsis thaliana (Mouse-ear cress).